Consider the following 37-residue polypeptide: Large ribosomal subunit protein bL36 (37 aa).

Belongs to the bacterial ribosomal protein bL36 family.

The polypeptide is Large ribosomal subunit protein bL36 (Salinispora tropica (strain ATCC BAA-916 / DSM 44818 / JCM 13857 / NBRC 105044 / CNB-440)).